The chain runs to 227 residues: Ribose-5-phosphate isomerase A (227 aa).

Residues 26 to 29, 82 to 85, and 95 to 98 each bind substrate; these read TGST, DGAD, and KGGG. The Proton acceptor role is filled by glutamate 104. Residue lysine 122 participates in substrate binding.

It belongs to the ribose 5-phosphate isomerase family. In terms of assembly, homodimer.

It carries out the reaction aldehydo-D-ribose 5-phosphate = D-ribulose 5-phosphate. It functions in the pathway carbohydrate degradation; pentose phosphate pathway; D-ribose 5-phosphate from D-ribulose 5-phosphate (non-oxidative stage): step 1/1. Its function is as follows. Catalyzes the reversible conversion of ribose-5-phosphate to ribulose 5-phosphate. This Streptococcus pyogenes serotype M1 protein is Ribose-5-phosphate isomerase A.